The chain runs to 132 residues: Small ribosomal subunit protein uS8 (132 aa).

It belongs to the universal ribosomal protein uS8 family. As to quaternary structure, part of the 30S ribosomal subunit. Contacts proteins S5 and S12.

Its function is as follows. One of the primary rRNA binding proteins, it binds directly to 16S rRNA central domain where it helps coordinate assembly of the platform of the 30S subunit. The chain is Small ribosomal subunit protein uS8 from Mycoplasmopsis synoviae (strain 53) (Mycoplasma synoviae).